Consider the following 263-residue polypeptide: MKTILDFHDKKSKKQKISMITCYDYSFARIVADSDIDCILVGDSLAMVMLGHSTTLDVSASVMAHHTAAVVRGAGDKFVIADLPFMSYRKGLTANMTAVEKVMKAGAHAVKLEGAAGNLKLVRHLVDSGVPVMGHLGLTPQSVNQLGGFKVQGRDEKAQKKILEAALQLQDAGAFSVVLECVPSKLAKEITAALEIPTIGIGAGVDCDGQVLVLQDMLGMNQGFKPKFVKTYLDGFNTIKGALNQYHQEVSTEIFPSEKESYS.

The Mg(2+) site is built by aspartate 43 and aspartate 82. 3-methyl-2-oxobutanoate contacts are provided by residues 43 to 44 (DS), aspartate 82, and lysine 111. Residue glutamate 113 participates in Mg(2+) binding. Glutamate 180 serves as the catalytic Proton acceptor.

The protein belongs to the PanB family. As to quaternary structure, homodecamer; pentamer of dimers. Mg(2+) is required as a cofactor.

The protein resides in the cytoplasm. The enzyme catalyses 3-methyl-2-oxobutanoate + (6R)-5,10-methylene-5,6,7,8-tetrahydrofolate + H2O = 2-dehydropantoate + (6S)-5,6,7,8-tetrahydrofolate. It participates in cofactor biosynthesis; (R)-pantothenate biosynthesis; (R)-pantoate from 3-methyl-2-oxobutanoate: step 1/2. Catalyzes the reversible reaction in which hydroxymethyl group from 5,10-methylenetetrahydrofolate is transferred onto alpha-ketoisovalerate to form ketopantoate. The polypeptide is 3-methyl-2-oxobutanoate hydroxymethyltransferase (Bdellovibrio bacteriovorus (strain ATCC 15356 / DSM 50701 / NCIMB 9529 / HD100)).